The primary structure comprises 241 residues: PHD finger protein ALFIN-LIKE 1 (241 aa).

Position 2 is an N-acetylalanine (alanine 2). Positions 142–182 (DGKPSMDLGSKSRNGVKRSIEGQTKSTPKLMEESYEDEDDE) are disordered. The PHD-type zinc finger occupies 185 to 237 (DTLCGSCGGNYTNDEFWICCDVCERWYHGKCVKITPAKAESIKQYKCPSCCTK).

The protein belongs to the Alfin family. As to quaternary structure, interacts with H3K4me3 and to a lesser extent with H3K4me2. As to expression, ubiquitously expressed.

It localises to the nucleus. Histone-binding component that specifically recognizes H3 tails trimethylated on 'Lys-4' (H3K4me3), which mark transcription start sites of virtually all active genes. In Arabidopsis thaliana (Mouse-ear cress), this protein is PHD finger protein ALFIN-LIKE 1 (AL1).